The sequence spans 244 residues: Carboxy-S-adenosyl-L-methionine synthase (244 aa).

Residues Tyr40, 65-67 (GCS), 90-91 (DN), 119-120 (DL), Asn134, and Arg201 each bind S-adenosyl-L-methionine.

Belongs to the class I-like SAM-binding methyltransferase superfamily. Cx-SAM synthase family. In terms of assembly, homodimer.

It carries out the reaction prephenate + S-adenosyl-L-methionine = carboxy-S-adenosyl-L-methionine + 3-phenylpyruvate + H2O. Functionally, catalyzes the conversion of S-adenosyl-L-methionine (SAM) to carboxy-S-adenosyl-L-methionine (Cx-SAM). The sequence is that of Carboxy-S-adenosyl-L-methionine synthase from Trichlorobacter lovleyi (strain ATCC BAA-1151 / DSM 17278 / SZ) (Geobacter lovleyi).